A 225-amino-acid polypeptide reads, in one-letter code: uncharacterized protein (225 aa).

A helical membrane pass occupies residues 181–203; sequence INIFVVFMFIIYLLFYIISSTVF.

It localises to the cell membrane. This is an uncharacterized protein from Bacillus anthracis.